The primary structure comprises 269 residues: Hydroxyethylthiazole kinase (269 aa).

Met-45 contributes to the substrate binding site. Residues Arg-121 and Thr-167 each contribute to the ATP site. Gly-194 serves as a coordination point for substrate.

It belongs to the Thz kinase family. Requires Mg(2+) as cofactor.

The enzyme catalyses 5-(2-hydroxyethyl)-4-methylthiazole + ATP = 4-methyl-5-(2-phosphooxyethyl)-thiazole + ADP + H(+). It functions in the pathway cofactor biosynthesis; thiamine diphosphate biosynthesis; 4-methyl-5-(2-phosphoethyl)-thiazole from 5-(2-hydroxyethyl)-4-methylthiazole: step 1/1. In terms of biological role, catalyzes the phosphorylation of the hydroxyl group of 4-methyl-5-beta-hydroxyethylthiazole (THZ). The chain is Hydroxyethylthiazole kinase from Brevibacillus brevis (strain 47 / JCM 6285 / NBRC 100599).